We begin with the raw amino-acid sequence, 126 residues long: Histone H2B type 1-J (126 aa).

Residues methionine 1–lysine 12 are compositionally biased toward low complexity. A disordered region spans residues methionine 1–lysine 35. Proline 2 carries the post-translational modification N-acetylproline. An ADP-ribosyl glutamic acid modification is found at glutamate 3. Lysine 6 carries the N6-(2-hydroxyisobutyryl)lysine; alternate modification. Lysine 6 is modified (N6-(beta-hydroxybutyryl)lysine; alternate). Lysine 6 is subject to N6-acetyllysine; alternate. Lysine 6 carries the post-translational modification N6-butyryllysine; alternate. Lysine 6 is modified (N6-crotonyllysine; alternate). Lysine 6 is modified (N6-lactoyllysine; alternate). Lysine 6 is covalently cross-linked (Glycyl lysine isopeptide (Lys-Gly) (interchain with G-Cter in SUMO2); alternate). Serine 7 bears the ADP-ribosylserine mark. Lysine 12 bears the N6-(beta-hydroxybutyryl)lysine; alternate mark. An N6-acetyllysine; alternate mark is found at lysine 12 and lysine 13. An N6-crotonyllysine; alternate mark is found at lysine 12 and lysine 13. Lysine 12 is modified (N6-lactoyllysine; alternate). The residue at position 13 (lysine 13) is an N6-(2-hydroxyisobutyryl)lysine; alternate. Phosphoserine; by STK4/MST1 is present on serine 15. 4 positions are modified to N6-acetyllysine; alternate: lysine 16, lysine 17, lysine 21, and lysine 24. N6-crotonyllysine; alternate is present on residues lysine 16, lysine 17, lysine 21, and lysine 24. Lysine 16, lysine 17, lysine 21, and lysine 24 each carry N6-lactoyllysine; alternate. 2 positions are modified to N6-(beta-hydroxybutyryl)lysine; alternate: lysine 17 and lysine 21. Lysine 17 is modified (N6-glutaryllysine; alternate). N6-(2-hydroxyisobutyryl)lysine; alternate occurs at positions 21 and 24. Lysine 21 is modified (N6-butyryllysine; alternate). Residue lysine 21 forms a Glycyl lysine isopeptide (Lys-Gly) (interchain with G-Cter in SUMO2); alternate linkage. Position 25 is an N6-(2-hydroxyisobutyryl)lysine (lysine 25). An N6-(2-hydroxyisobutyryl)lysine; alternate modification is found at lysine 35. Lysine 35 carries the post-translational modification N6-(beta-hydroxybutyryl)lysine; alternate. Lysine 35 carries the N6-crotonyllysine; alternate modification. The residue at position 35 (lysine 35) is an N6-glutaryllysine; alternate. Residue lysine 35 is modified to N6-succinyllysine; alternate. Residue lysine 35 forms a Glycyl lysine isopeptide (Lys-Gly) (interchain with G-Cter in ubiquitin); alternate linkage. The residue at position 36 (glutamate 36) is a PolyADP-ribosyl glutamic acid. Serine 37 is subject to Phosphoserine; by AMPK. N6-(2-hydroxyisobutyryl)lysine; alternate occurs at positions 44, 47, and 58. An N6-lactoyllysine; alternate modification is found at lysine 44. An N6-glutaryllysine; alternate mark is found at lysine 44 and lysine 47. Position 47 is an N6-methyllysine; alternate (lysine 47). An N6,N6-dimethyllysine; alternate modification is found at lysine 58. A Dimethylated arginine modification is found at arginine 80. The residue at position 86 (lysine 86) is an N6-(2-hydroxyisobutyryl)lysine; alternate. An N6-(beta-hydroxybutyryl)lysine; alternate modification is found at lysine 86. Lysine 86 is modified (N6-acetyllysine; alternate). N6-lactoyllysine; alternate is present on lysine 86. Lysine 86 is subject to N6,N6,N6-trimethyllysine; alternate. 2 positions are modified to omega-N-methylarginine: arginine 87 and arginine 93. N6-(2-hydroxyisobutyryl)lysine; alternate is present on lysine 109. Lysine 109 carries the post-translational modification N6-lactoyllysine; alternate. An N6-glutaryllysine; alternate modification is found at lysine 109. Lysine 109 bears the N6-methyllysine; alternate mark. An O-linked (GlcNAc) serine glycan is attached at serine 113. Phosphothreonine is present on threonine 116. N6-(2-hydroxyisobutyryl)lysine; alternate is present on residues lysine 117 and lysine 121. An N6-(beta-hydroxybutyryl)lysine; alternate mark is found at lysine 117 and lysine 121. N6-lactoyllysine; alternate is present on residues lysine 117 and lysine 121. 2 positions are modified to N6-glutaryllysine; alternate: lysine 117 and lysine 121. Residues lysine 117 and lysine 121 each carry the N6-succinyllysine; alternate modification. Lysine 117 carries the N6-malonyllysine; alternate modification. An N6-methylated lysine; alternate modification is found at lysine 117. Residue lysine 121 forms a Glycyl lysine isopeptide (Lys-Gly) (interchain with G-Cter in ubiquitin); alternate linkage.

Belongs to the histone H2B family. The nucleosome is a histone octamer containing two molecules each of H2A, H2B, H3 and H4 assembled in one H3-H4 heterotetramer and two H2A-H2B heterodimers. The octamer wraps approximately 147 bp of DNA. Heterodimer H2BC11 and H2AZ1 interacts with VPS72 (via N-terminal domain). Monoubiquitination at Lys-35 (H2BK34Ub) by the MSL1/MSL2 dimer is required for histone H3 'Lys-4' (H3K4me) and 'Lys-79' (H3K79me) methylation and transcription activation at specific gene loci, such as HOXA9 and MEIS1 loci. Similarly, monoubiquitination at Lys-121 (H2BK120Ub) by the RNF20/40 complex gives a specific tag for epigenetic transcriptional activation and is also prerequisite for histone H3 'Lys-4' and 'Lys-79' methylation. It also functions cooperatively with the FACT dimer to stimulate elongation by RNA polymerase II. H2BK120Ub also acts as a regulator of mRNA splicing: deubiquitination by USP49 is required for efficient cotranscriptional splicing of a large set of exons. In terms of processing, phosphorylation at Ser-37 (H2BS36ph) by AMPK in response to stress promotes transcription. Phosphorylated on Ser-15 (H2BS14ph) by STK4/MST1 during apoptosis; which facilitates apoptotic chromatin condensation. Also phosphorylated on Ser-15 in response to DNA double strand breaks (DSBs), and in correlation with somatic hypermutation and immunoglobulin class-switch recombination. Post-translationally, glcNAcylation at Ser-113 promotes monoubiquitination of Lys-121. It fluctuates in response to extracellular glucose, and associates with transcribed genes. ADP-ribosylated by PARP1 or PARP2 on Ser-7 (H2BS6ADPr) in response to DNA damage. H2BS6ADPr promotes recruitment of CHD1L. Mono-ADP-ribosylated on Glu-3 (H2BE2ADPr) by PARP3 in response to single-strand breaks. Poly ADP-ribosylation on Glu-36 (H2BE35ADPr) by PARP1 regulates adipogenesis: it inhibits phosphorylation at Ser-37 (H2BS36ph), thereby blocking expression of pro-adipogenetic genes. In terms of processing, crotonylation (Kcr) is specifically present in male germ cells and marks testis-specific genes in post-meiotic cells, including X-linked genes that escape sex chromosome inactivation in haploid cells. Crotonylation marks active promoters and enhancers and confers resistance to transcriptional repressors. It is also associated with post-meiotically activated genes on autosomes. Post-translationally, lactylated in macrophages by EP300/P300 by using lactoyl-CoA directly derived from endogenous or exogenous lactate, leading to stimulates gene transcription.

It localises to the nucleus. Its subcellular location is the chromosome. Functionally, core component of nucleosome. Nucleosomes wrap and compact DNA into chromatin, limiting DNA accessibility to the cellular machineries which require DNA as a template. Histones thereby play a central role in transcription regulation, DNA repair, DNA replication and chromosomal stability. DNA accessibility is regulated via a complex set of post-translational modifications of histones, also called histone code, and nucleosome remodeling. In terms of biological role, has broad antibacterial activity. May contribute to the formation of the functional antimicrobial barrier of the colonic epithelium, and to the bactericidal activity of amniotic fluid. The chain is Histone H2B type 1-J from Homo sapiens (Human).